We begin with the raw amino-acid sequence, 358 residues long: Hydroxyproline O-arabinosyltransferase 2 (358 aa).

The helical; Signal-anchor transmembrane segment at 7–26 threads the bilayer; the sequence is YFFPILMTLSLFLIIRYNYI.

As to expression, ubiquitous.

Its subcellular location is the golgi apparatus. It is found in the cis-Golgi network membrane. The enzyme catalyses trans-4-hydroxy-L-prolyl-[protein] + UDP-beta-L-arabinofuranose = O-(beta-L-arabinofuranosyl)-trans-4-hydroxy-L-prolyl-[protein] + UDP + H(+). Its function is as follows. Glycosyltransferase involved in the O-arabinosylation of several proteins including extensins and small signaling peptides. Catalyzes the transfer of the initial L-arabinose to the hydroxyl group of Hyp residues. Contributes redundantly with HPAT1 and HPAT3 to arabinosylation of EXT3. In Arabidopsis thaliana (Mouse-ear cress), this protein is Hydroxyproline O-arabinosyltransferase 2.